Here is a 361-residue protein sequence, read N- to C-terminus: Chorismate synthase (361 aa).

NADP(+) contacts are provided by Arg48 and Arg54. FMN is bound by residues Arg125–Ser127, Asn238–Ala239, Gly278, Lys293–Ser297, and Arg319.

It belongs to the chorismate synthase family. In terms of assembly, homotetramer. Requires FMNH2 as cofactor.

It carries out the reaction 5-O-(1-carboxyvinyl)-3-phosphoshikimate = chorismate + phosphate. The protein operates within metabolic intermediate biosynthesis; chorismate biosynthesis; chorismate from D-erythrose 4-phosphate and phosphoenolpyruvate: step 7/7. Its function is as follows. Catalyzes the anti-1,4-elimination of the C-3 phosphate and the C-6 proR hydrogen from 5-enolpyruvylshikimate-3-phosphate (EPSP) to yield chorismate, which is the branch point compound that serves as the starting substrate for the three terminal pathways of aromatic amino acid biosynthesis. This reaction introduces a second double bond into the aromatic ring system. This chain is Chorismate synthase, found in Photorhabdus laumondii subsp. laumondii (strain DSM 15139 / CIP 105565 / TT01) (Photorhabdus luminescens subsp. laumondii).